A 445-amino-acid polypeptide reads, in one-letter code: Sporulation protein YkvU (445 aa).

12 consecutive transmembrane segments (helical) span residues 7-29 (GIILLSIAAFFAECLEFVVNMIL), 39-61 (GLYMSILPTIFLIIVIASLELPI), 82-104 (AFRMTAIFTAFSTAAASIALPFI), 109-131 (TYHPFIKGIVIGLIPVVAFTSIA), 144-166 (IAIANVLKKIIQLLCLFLFFQWY), 172-194 (MAVLISLFVLVVSDVVVLVYLYS), 237-259 (VNAIEPFLVKGALLAAGVAGTAA), 269-291 (VAVTIGSFPAFIAHSLMVVMIPS), 312-334 (IFITLGYGIPAVWVMFQFAGPLT), 349-371 (LLWPYFLFHLFVMPLQACLIGMG), 376-395 (AFYHNVWSHIVALSMMYVLG), and 400-422 (LQMLGIILGMNTGMILLTSLHYA).

It localises to the forespore membrane. This Bacillus subtilis (strain 168) protein is Sporulation protein YkvU (ykvU).